Consider the following 48-residue polypeptide: U-reduvitoxin-Pr5a (48 aa).

A signal peptide spans 1 to 19; the sequence is MRLFLIFTFIVASLASVYG. Disulfide bonds link cysteine 20-cysteine 34, cysteine 27-cysteine 39, and cysteine 33-cysteine 44.

Belongs to the venom Ptu1-like knottin family. Expressed by the venom gland.

It is found in the secreted. Functionally, binds reversibly and blocks P/Q-type voltage-gated calcium channels (Cav). The polypeptide is U-reduvitoxin-Pr5a (Platymeris rhadamanthus (Red spot assassin bug)).